The primary structure comprises 605 residues: Replication protein E1 (605 aa).

The Nuclear localization signal motif lies at 76–78; that stretch reads KRK. Serine 81 and serine 89 each carry phosphoserine; by host. The Nuclear export signal signature appears at 88 to 97; the sequence is LSPRLESISL. The tract at residues 145-308 is DNA-binding region; the sequence is HLGTVDIHYT…TIVGHQSTEA (164 aa). In terms of domain architecture, SF3 helicase spans 407 to 557; sequence VNVIMFLAAL…FPMKPDNTPE (151 aa). 433–440 is a binding site for ATP; it reads GPPNTGKS. Residue lysine 514 forms a Glycyl lysine isopeptide (Lys-Gly) (interchain with G-Cter in SUMO) linkage. The segment at 580 to 605 is disordered; the sequence is DQEDEGENGESQQAFQCSARSANEHL. A compositionally biased stretch (polar residues) spans 588–605; it reads GESQQAFQCSARSANEHL.

It belongs to the papillomaviridae E1 protein family. Can form hexamers. Interacts with E2 protein; this interaction increases E1 DNA binding specificity. Interacts with host DNA polymerase subunit POLA2. Interacts with host single stranded DNA-binding protein RPA1. Interacts with host TOP1; this interaction stimulates the enzymatic activity of TOP1. Phosphorylated. In terms of processing, sumoylated.

The protein resides in the host nucleus. It catalyses the reaction Couples ATP hydrolysis with the unwinding of duplex DNA by translocating in the 3'-5' direction.. The catalysed reaction is ATP + H2O = ADP + phosphate + H(+). Functionally, ATP-dependent DNA 3'-5' helicase required for initiation of viral DNA replication. It forms a complex with the viral E2 protein. The E1-E2 complex binds to the replication origin which contains binding sites for both proteins. During the initial step, a dimer of E1 interacts with a dimer of protein E2 leading to a complex that binds the viral origin of replication with high specificity. Then, a second dimer of E1 displaces the E2 dimer in an ATP-dependent manner to form the E1 tetramer. Following this, two E1 monomers are added to each half of the site, which results in the formation of two E1 trimers on the viral ori. Subsequently, two hexamers will be created. The double hexamer acts as a bi-directional helicase machinery and unwinds the viral DNA and then recruits the host DNA polymerase to start replication. This chain is Replication protein E1, found in Homo sapiens (Human).